The primary structure comprises 119 residues: Large ribosomal subunit protein bL20 (119 aa).

It belongs to the bacterial ribosomal protein bL20 family.

Its function is as follows. Binds directly to 23S ribosomal RNA and is necessary for the in vitro assembly process of the 50S ribosomal subunit. It is not involved in the protein synthesizing functions of that subunit. This chain is Large ribosomal subunit protein bL20, found in Clostridium tetani (strain Massachusetts / E88).